A 169-amino-acid chain; its full sequence is Regulator of ribonuclease activity A (169 aa).

It belongs to the RraA family. In terms of assembly, homotrimer. Binds to both RNA-binding sites in the C-terminal region of Rne and to RhlB.

The protein resides in the cytoplasm. In terms of biological role, globally modulates RNA abundance by binding to RNase E (Rne) and regulating its endonucleolytic activity. Can modulate Rne action in a substrate-dependent manner by altering the composition of the degradosome. Modulates RNA-binding and helicase activities of the degradosome. The sequence is that of Regulator of ribonuclease activity A from Photorhabdus laumondii subsp. laumondii (strain DSM 15139 / CIP 105565 / TT01) (Photorhabdus luminescens subsp. laumondii).